Here is a 175-residue protein sequence, read N- to C-terminus: Shikimate kinase (175 aa).

Position 14–19 (14–19 (GAGKST)) interacts with ATP. Serine 18 serves as a coordination point for Mg(2+). Positions 36, 60, and 82 each coordinate substrate. Arginine 120 provides a ligand contact to ATP. Position 140 (arginine 140) interacts with substrate. Glutamine 157 is a binding site for ATP.

This sequence belongs to the shikimate kinase family. As to quaternary structure, monomer. It depends on Mg(2+) as a cofactor.

The protein localises to the cytoplasm. It carries out the reaction shikimate + ATP = 3-phosphoshikimate + ADP + H(+). It participates in metabolic intermediate biosynthesis; chorismate biosynthesis; chorismate from D-erythrose 4-phosphate and phosphoenolpyruvate: step 5/7. Functionally, catalyzes the specific phosphorylation of the 3-hydroxyl group of shikimic acid using ATP as a cosubstrate. This is Shikimate kinase from Pasteurella multocida (strain Pm70).